Reading from the N-terminus, the 238-residue chain is 14-3-3 protein 2 (238 aa).

Belongs to the 14-3-3 family.

In terms of biological role, probable adapter protein. The sequence is that of 14-3-3 protein 2 from Entamoeba histolytica (strain ATCC 30459 / HM-1:IMSS / ABRM).